Consider the following 702-residue polypeptide: uncharacterized protein (702 aa).

Composition is skewed to low complexity over residues 306–384 (NNNN…NNNN), 488–511 (PTKTTTSSNNSRNTSPTSSTTNIT), 559–590 (QQSQQQQQQQQQQQQQQQESNFYSNNNNNNNN), 603–612 (SNQNSNNNNQ), and 621–639 (NNNNNNTNSNNSNNNNNNN). Disordered stretches follow at residues 306-385 (NNNN…NNNE), 488-513 (PTKTTTSSNNSRNTSPTSSTTNITYG), and 551-645 (STMN…NSRY). In terms of domain architecture, VPS9 spans 337 to 489 (NNINNNINNN…IKSLDILSPT (153 aa)).

This is an uncharacterized protein from Dictyostelium discoideum (Social amoeba).